The following is a 273-amino-acid chain: Large ribosomal subunit protein uL2 (273 aa).

Disordered regions lie at residues 30–50 (YAPL…GRIT) and 221–273 (RGTA…RRGK). Basic residues predominate over residues 253–273 (KGKKTRHNKRTDKFIVRRRGK).

The protein belongs to the universal ribosomal protein uL2 family. Part of the 50S ribosomal subunit. Forms a bridge to the 30S subunit in the 70S ribosome.

One of the primary rRNA binding proteins. Required for association of the 30S and 50S subunits to form the 70S ribosome, for tRNA binding and peptide bond formation. It has been suggested to have peptidyltransferase activity; this is somewhat controversial. Makes several contacts with the 16S rRNA in the 70S ribosome. In Pasteurella multocida (strain Pm70), this protein is Large ribosomal subunit protein uL2.